The chain runs to 463 residues: UDP-N-acetylmuramoylalanine--D-glutamate ligase (463 aa).

109–115 provides a ligand contact to ATP; that stretch reads GTDGKST.

This sequence belongs to the MurCDEF family.

The protein localises to the cytoplasm. The catalysed reaction is UDP-N-acetyl-alpha-D-muramoyl-L-alanine + D-glutamate + ATP = UDP-N-acetyl-alpha-D-muramoyl-L-alanyl-D-glutamate + ADP + phosphate + H(+). The protein operates within cell wall biogenesis; peptidoglycan biosynthesis. Cell wall formation. Catalyzes the addition of glutamate to the nucleotide precursor UDP-N-acetylmuramoyl-L-alanine (UMA). In Leptospira interrogans serogroup Icterohaemorrhagiae serovar Lai (strain 56601), this protein is UDP-N-acetylmuramoylalanine--D-glutamate ligase.